A 332-amino-acid chain; its full sequence is 2,3-diketo-L-gulonate reductase (332 aa).

The Proton donor role is filled by H44. Residues 168–174 (ITMVDMS), 224–225 (WK), and 304–306 (GHE) contribute to the NAD(+) site.

It belongs to the LDH2/MDH2 oxidoreductase family. DlgD subfamily. In terms of assembly, homodimer.

The protein localises to the cytoplasm. It carries out the reaction 3-dehydro-L-gulonate + NAD(+) = 2,3-dioxo-L-gulonate + NADH + H(+). It catalyses the reaction 3-dehydro-L-gulonate + NADP(+) = 2,3-dioxo-L-gulonate + NADPH + H(+). Its function is as follows. Catalyzes the reduction of 2,3-diketo-L-gulonate in the presence of NADH, to form 3-keto-L-gulonate. The chain is 2,3-diketo-L-gulonate reductase from Pasteurella multocida (strain Pm70).